The primary structure comprises 305 residues: Superkiller complex protein 8 (305 aa).

WD repeat units lie at residues 14–57, 62–101, 104–143, 146–187, 188–227, 230–269, and 272–305; these read AHED…LEMQ, GHQL…QIRS, AGPV…KEYS, TRGK…HTLE, GHAM…LAAT, GHGS…CVHT, and DHQD…DCPI.

This sequence belongs to the SKI8 family. As to quaternary structure, component of the PAF1 complex. Component of the SKI complex.

It localises to the nucleus. It is found in the cytoplasm. Component of the PAF1 complex (PAF1C) which has multiple functions during transcription by RNA polymerase II and is implicated in regulation of development and maintenance of embryonic stem cell pluripotency. PAF1C associates with RNA polymerase II through interaction with POLR2A CTD non-phosphorylated and 'Ser-2'- and 'Ser-5'-phosphorylated forms and is involved in transcriptional elongation, acting both independently and synergistically with TCEA1 and in cooperation with the DSIF complex and HTATSF1. Also acts as a component of the SKI complex, a multiprotein complex that assists the RNA-degrading exosome during the mRNA decay and quality-control pathways. The SKI complex catalyzes mRNA extraction from 80S ribosomal complexes in the 3'-5' direction and channels mRNA to the cytosolic exosome for degradation. This is Superkiller complex protein 8 (skic8) from Xenopus laevis (African clawed frog).